A 143-amino-acid polypeptide reads, in one-letter code: Large ribosomal subunit protein uL11 (143 aa).

Belongs to the universal ribosomal protein uL11 family. As to quaternary structure, part of the ribosomal stalk of the 50S ribosomal subunit. Interacts with L10 and the large rRNA to form the base of the stalk. L10 forms an elongated spine to which L12 dimers bind in a sequential fashion forming a multimeric L10(L12)X complex. Post-translationally, one or more lysine residues are methylated.

Its function is as follows. Forms part of the ribosomal stalk which helps the ribosome interact with GTP-bound translation factors. In Pseudomonas fluorescens (strain SBW25), this protein is Large ribosomal subunit protein uL11.